We begin with the raw amino-acid sequence, 168 residues long: Endoribonuclease YbeY (168 aa).

Residues H123, H127, and H133 each coordinate Zn(2+).

This sequence belongs to the endoribonuclease YbeY family. Requires Zn(2+) as cofactor.

The protein localises to the cytoplasm. In terms of biological role, single strand-specific metallo-endoribonuclease involved in late-stage 70S ribosome quality control and in maturation of the 3' terminus of the 16S rRNA. In Francisella tularensis subsp. holarctica (strain LVS), this protein is Endoribonuclease YbeY.